The following is a 347-amino-acid chain: Ribosomal RNA small subunit methyltransferase C (347 aa).

Belongs to the methyltransferase superfamily. RsmC family. Monomer.

Its subcellular location is the cytoplasm. The enzyme catalyses guanosine(1207) in 16S rRNA + S-adenosyl-L-methionine = N(2)-methylguanosine(1207) in 16S rRNA + S-adenosyl-L-homocysteine + H(+). Functionally, specifically methylates the guanine in position 1207 of 16S rRNA in the 30S particle. This Shewanella putrefaciens (strain CN-32 / ATCC BAA-453) protein is Ribosomal RNA small subunit methyltransferase C.